A 439-amino-acid polypeptide reads, in one-letter code: Damage-control phosphatase ARMT1 (439 aa).

A2 carries the post-translational modification N-acetylalanine. Residue S4 is modified to Phosphoserine. K40 is subject to N6-acetyllysine. Mn(2+)-binding residues include D251 and N252. Residue 251 to 252 (DN) participates in substrate binding. 2 residues coordinate S-adenosyl-L-methionine: E256 and D289. Residue D289 coordinates Mn(2+). Substrate contacts are provided by residues 365–369 (DLNYR) and K402. The Subfamily III RTxK motif signature appears at 399–402 (RTLK).

This sequence belongs to the damage-control phosphatase family. Sugar phosphate phosphatase III subfamily. Requires Mn(2+) as cofactor. It depends on Ni(2+) as a cofactor. Automethylated.

It catalyses the reaction beta-D-fructose 1-phosphate + H2O = D-fructose + phosphate. The enzyme catalyses beta-D-fructose 6-phosphate = dihydroxyacetone + D-glyceraldehyde 3-phosphate. The catalysed reaction is L-glutamyl-[protein] + S-adenosyl-L-methionine = [protein]-L-glutamate 5-O-methyl ester + S-adenosyl-L-homocysteine. In terms of biological role, metal-dependent phosphatase that shows phosphatase activity against several substrates, including fructose-1-phosphate and fructose-6-phosphate. Its preference for fructose-1-phosphate, a strong glycating agent that causes DNA damage rather than a canonical yeast metabolite, suggests a damage-control function in hexose phosphate metabolism. Has also been shown to have O-methyltransferase activity that methylates glutamate residues of target proteins to form gamma-glutamyl methyl ester residues. Possibly methylates PCNA, suggesting it is involved in the DNA damage response. The chain is Damage-control phosphatase ARMT1 from Mus musculus (Mouse).